We begin with the raw amino-acid sequence, 149 residues long: Calmodulin (149 aa).

The residue at position 2 (Ala-2) is an N-acetylalanine. 4 EF-hand domains span residues 8–43, 44–79, 81–116, and 117–149; these read EQIA…LGQN, PTEA…KMKD, DSEE…LGEK, and LTDE…MTSK. Ca(2+) contacts are provided by Asp-21, Asp-23, Asp-25, Thr-27, Glu-32, Asp-57, Asp-59, Asn-61, Thr-63, Glu-68, Asp-94, Asp-96, Asn-98, and Glu-105. At Lys-116 the chain carries N6,N6,N6-trimethyllysine. Ca(2+) is bound by residues Asp-130, Asp-132, Asp-134, Gln-136, and Glu-141.

It belongs to the calmodulin family.

Its function is as follows. Calmodulin mediates the control of a large number of enzymes, ion channels and other proteins by Ca(2+). Among the enzymes to be stimulated by the calmodulin-Ca(2+) complex are a number of protein kinases and phosphatases. The polypeptide is Calmodulin (Metridium senile (Brown sea anemone)).